The sequence spans 515 residues: MSSTKKPLVLTILDGYGHREEQQDNAILNAKTPVMDVLWQQQPHTLIAASGLDVGLPDGQMGNSEVGHVNLGAGRIVYQDLTRLDKEIKEGDFFTNPTLTAAVDNAVKTGKAVHIMGLLSAGGVHSHEDHIMAMVELAAKRGATAIYLHAFLDGRDTPPRSAESSLKRFTAKFAELGNGRIASIIGRYYAMDRDNRWDRVQLAYDLLTQAKGEFTADNAVAGLQAAYARGENDEFVKPTVIQATGEADAAMNEGDTLIFMNFRADRARQITRTFVNAEFDGFKRDKVVNFGDFIMLTEYAADIKVACAYPPASLTNTFGEWLMKHDKTQLRISETEKYAHVTFFYNGGVEEPFKGEDRILINSPKVATYDLQPEMSSAELTEKLVSAIGSGKYDVIICNYPNGDMVGHTGDYDAAVKAVETLDNCIEQVVAAVKAADGQLLITADHGNAEQMRDPATGQAHTAHTSLPVPLIYVGNKAVKAVEGGKLSDIAPTMLSLMEMEIPQEMTGKPLFIVE.

D14 and S64 together coordinate Mn(2+). S64 acts as the Phosphoserine intermediate in catalysis. Residues H125, 155 to 156, R187, R193, 263 to 266, and K337 contribute to the substrate site; these read RD and RADR. 5 residues coordinate Mn(2+): D404, H408, D445, H446, and H464.

Belongs to the BPG-independent phosphoglycerate mutase family. Monomer. Mn(2+) serves as cofactor.

The enzyme catalyses (2R)-2-phosphoglycerate = (2R)-3-phosphoglycerate. It functions in the pathway carbohydrate degradation; glycolysis; pyruvate from D-glyceraldehyde 3-phosphate: step 3/5. In terms of biological role, catalyzes the interconversion of 2-phosphoglycerate and 3-phosphoglycerate. This Yersinia pestis bv. Antiqua (strain Antiqua) protein is 2,3-bisphosphoglycerate-independent phosphoglycerate mutase.